A 516-amino-acid polypeptide reads, in one-letter code: Lysine--tRNA ligase (516 aa).

A disordered region spans residues 1 to 23 (MTEPNRAQAAPASPTAELPAADE). Mg(2+) contacts are provided by Glu-426 and Glu-433.

Belongs to the class-II aminoacyl-tRNA synthetase family. Homodimer. Requires Mg(2+) as cofactor.

The protein resides in the cytoplasm. It carries out the reaction tRNA(Lys) + L-lysine + ATP = L-lysyl-tRNA(Lys) + AMP + diphosphate. In Cupriavidus pinatubonensis (strain JMP 134 / LMG 1197) (Cupriavidus necator (strain JMP 134)), this protein is Lysine--tRNA ligase.